Here is a 167-residue protein sequence, read N- to C-terminus: SsrA-binding protein (167 aa).

The segment covering 139-158 (QNHDKRDAAKDRDWQRDKQR) has biased composition (basic and acidic residues). Residues 139–167 (QNHDKRDAAKDRDWQRDKQRVMRRHNRDA) are disordered.

The protein belongs to the SmpB family.

The protein resides in the cytoplasm. Required for rescue of stalled ribosomes mediated by trans-translation. Binds to transfer-messenger RNA (tmRNA), required for stable association of tmRNA with ribosomes. tmRNA and SmpB together mimic tRNA shape, replacing the anticodon stem-loop with SmpB. tmRNA is encoded by the ssrA gene; the 2 termini fold to resemble tRNA(Ala) and it encodes a 'tag peptide', a short internal open reading frame. During trans-translation Ala-aminoacylated tmRNA acts like a tRNA, entering the A-site of stalled ribosomes, displacing the stalled mRNA. The ribosome then switches to translate the ORF on the tmRNA; the nascent peptide is terminated with the 'tag peptide' encoded by the tmRNA and targeted for degradation. The ribosome is freed to recommence translation, which seems to be the essential function of trans-translation. This is SsrA-binding protein from Xanthomonas euvesicatoria pv. vesicatoria (strain 85-10) (Xanthomonas campestris pv. vesicatoria).